Consider the following 256-residue polypeptide: Major prion protein (256 aa).

An N-terminal signal peptide occupies residues 1-24 (MVKSHIGSWILVLFVAMWSDVGLC). Residues 25-233 (KKRPKPGGGW…ESEAYYQRGA (209 aa)) are interaction with GRB2, ERI3 and SYN1. Residues 28–110 (PKPGGGWNTG…QWNKPSKPKT (83 aa)) form a disordered region. 5 repeat units span residues 54–62 (PQGGGGWGQ), 63–70 (PHGGGWGQ), 71–78 (PHGGGWGQ), 79–86 (PHGGGWGQ), and 87–95 (PHGGGGWGQ). The 5 X 8 AA tandem repeats of P-H-G-G-G-W-G-Q stretch occupies residues 54-95 (PQGGGGWGQPHGGGWGQPHGGGWGQPHGGGWGQPHGGGGWGQ). Residues 55 to 97 (QGGGGWGQPHGGGWGQPHGGGWGQPHGGGWGQPHGGGGWGQGG) are compositionally biased toward gly residues. The Cu(2+) site is built by His64, Gly65, Gly66, His72, Gly73, Gly74, His80, Gly81, Gly82, His88, Gly90, and Gly91. Cys182 and Cys217 are oxidised to a cystine. N-linked (GlcNAc...) asparagine glycans are attached at residues Asn184 and Asn200. Ala233 carries the GPI-anchor amidated alanine lipid modification. A propeptide spans 234 to 256 (SVILFSSPPVILLISFLIFLIVG) (removed in mature form).

The protein belongs to the prion family. As to quaternary structure, monomer and homodimer. Has a tendency to aggregate into amyloid fibrils containing a cross-beta spine, formed by a steric zipper of superposed beta-strands. Soluble oligomers may represent an intermediate stage on the path to fibril formation. Copper binding may promote oligomerization. Interacts with GRB2, APP, ERI3/PRNPIP and SYN1. Mislocalized cytosolically exposed PrP interacts with MGRN1; this interaction alters MGRN1 subcellular location and causes lysosomal enlargement. Interacts with KIAA1191.

It localises to the cell membrane. The protein localises to the golgi apparatus. Its function is as follows. Its primary physiological function is unclear. Has cytoprotective activity against internal or environmental stresses. May play a role in neuronal development and synaptic plasticity. May be required for neuronal myelin sheath maintenance. May play a role in iron uptake and iron homeostasis. Soluble oligomers are toxic to cultured neuroblastoma cells and induce apoptosis (in vitro). Association with GPC1 (via its heparan sulfate chains) targets PRNP to lipid rafts. Also provides Cu(2+) or Zn(2+) for the ascorbate-mediated GPC1 deaminase degradation of its heparan sulfate side chains. The polypeptide is Major prion protein (PRNP) (Cervus elaphus (Red deer)).